Reading from the N-terminus, the 1034-residue chain is Error-prone DNA polymerase (1034 aa).

This sequence belongs to the DNA polymerase type-C family. DnaE2 subfamily.

The protein localises to the cytoplasm. The catalysed reaction is DNA(n) + a 2'-deoxyribonucleoside 5'-triphosphate = DNA(n+1) + diphosphate. DNA polymerase involved in damage-induced mutagenesis and translesion synthesis (TLS). It is not the major replicative DNA polymerase. The sequence is that of Error-prone DNA polymerase from Pseudomonas fluorescens (strain ATCC BAA-477 / NRRL B-23932 / Pf-5).